Here is a 465-residue protein sequence, read N- to C-terminus: MTATSGARTSDARTSGARTSDAGIGSPAAIELVGVAKDYQTRGRAVPAVSRVDLAIRPGEFFSLLGPSGCGKSTTLRMIAGFEEPTRGRILLQGRDVTAVPPNRRDVNLVFQSYALFPHLDVAGNVAFGLRRRGVKGRELRERVGAMLDLVELSELADRRPRELSGGQQQRVALARALVNRPAALLLDEPLGALDLKLRQTMQIQLKAIQREVGITFLYVTHDQGEALTMSDRIAVMNGGRVEQLASPRDIYERPRTRFVAGFIGTSNLLRRTVRALDAAGPGGRPTVVLDAGTDERLSAPLHPPTGPLRAGDQVELTVRPEKIEMSVSRPDGPGCALRGRIVEVVYLGTYTTYTVATHGGTEITVFWQNSTGAGNVAERGDEIWLSWLPEHSYVLPEPVALPEPVALPGSVVPPETVNQPDSVGPPDSIIPPHSVVAPDSVDPRETVVPAAGTSADPAAYRISH.

Polar residues predominate over residues 1 to 18 (MTATSGARTSDARTSGAR). Residues 1–21 (MTATSGARTSDARTSGARTSD) form a disordered region. Residues 30–264 (IELVGVAKDY…PRTRFVAGFI (235 aa)) form the ABC transporter domain. An ATP-binding site is contributed by 66–73 (GPSGCGKS).

Belongs to the ABC transporter superfamily. Spermidine/putrescine importer (TC 3.A.1.11.1) family. In terms of assembly, the complex is composed of two ATP-binding proteins (PotA), two transmembrane proteins (PotB and PotC) and a solute-binding protein (PotD).

The protein resides in the cell membrane. It carries out the reaction ATP + H2O + polyamine-[polyamine-binding protein]Side 1 = ADP + phosphate + polyamineSide 2 + [polyamine-binding protein]Side 1.. Its function is as follows. Part of the ABC transporter complex PotABCD involved in spermidine/putrescine import. Responsible for energy coupling to the transport system. This chain is Spermidine/putrescine import ATP-binding protein PotA, found in Frankia alni (strain DSM 45986 / CECT 9034 / ACN14a).